The chain runs to 576 residues: DNA mismatch repair protein MutL (576 aa).

Belongs to the DNA mismatch repair MutL/HexB family.

This protein is involved in the repair of mismatches in DNA. It is required for dam-dependent methyl-directed DNA mismatch repair. May act as a 'molecular matchmaker', a protein that promotes the formation of a stable complex between two or more DNA-binding proteins in an ATP-dependent manner without itself being part of a final effector complex. The polypeptide is DNA mismatch repair protein MutL (Chlamydia trachomatis serovar L2 (strain ATCC VR-902B / DSM 19102 / 434/Bu)).